A 507-amino-acid chain; its full sequence is Histidine ammonia-lyase (507 aa).

Positions 140 to 142 (ASG) form a cross-link, 5-imidazolinone (Ala-Gly). 2,3-didehydroalanine (Ser) is present on Ser-141.

The protein belongs to the PAL/histidase family. Contains an active site 4-methylidene-imidazol-5-one (MIO), which is formed autocatalytically by cyclization and dehydration of residues Ala-Ser-Gly.

It localises to the cytoplasm. The enzyme catalyses L-histidine = trans-urocanate + NH4(+). Its pathway is amino-acid degradation; L-histidine degradation into L-glutamate; N-formimidoyl-L-glutamate from L-histidine: step 1/3. This Yersinia enterocolitica serotype O:8 / biotype 1B (strain NCTC 13174 / 8081) protein is Histidine ammonia-lyase.